Here is a 620-residue protein sequence, read N- to C-terminus: Preterminal protein (620 aa).

Residues Arg-356 to Arg-365 carry the Nuclear localization signal motif. An O-(5'-phospho-DNA)-serine modification is found at Ser-545.

Belongs to the adenoviridae terminal protein family. As to quaternary structure, heterodimer with the polymerase; this heterodimer binds to bp 9 to 18 of the genome. Interacts with host POU2F1; POU2F1 binds to the auxiliary sequences in the inverted terminal repeats and tethers the pTP-POL heterodimer to the origin DNA thereby participating in the assembly of the pre-initiation complex (POL-TP-DBP-NFIA-POU2F1). Preterminal protein is used to replicate viral genome, upon genomic encapsidation it is processed first into iTP and finally into TP by adenovirus protease.

The protein resides in the host nucleus matrix. Functionally, protein covalently bound to the viral DNA that acts as a primer for viral genomic replication by DNA strand displacement. Assembles on the viral origin of replication in an initiation complex with viral polymerase, DBP, host NFIA and host POU2F1/OCT1. During initiation, the polymerase covalently couples the first dCTP with Ser-580 of pTP. The terminal protein stimulates the template activity over 20 fold compared to protein-free templates. Neo-synthesized viral genomes are linked to two preterminal proteins, one for each 5' end. These new genomes are encapsidated in the nucleus, and during capsid maturation by viral protease, preterminal protein is first cleaved into intermediary (iTP), then into mature TP. May play a role in host nuclear matrix localization of genomic DNA. This chain is Preterminal protein, found in Bovine adenovirus 2 (BAdV-2).